The chain runs to 781 residues: Putative amine oxidase [copper-containing] (781 aa).

Residues 1-34 form the signal peptide; the sequence is MSLPKTANGMDKLKLCYLLLFYLGSSSLTEVSGA. Residues Cys-199 and Cys-203 are joined by a disulfide bond. 385-395 provides a ligand contact to substrate; it reads FFDSSYMIGMN. Asp-387 (proton acceptor) is an active-site residue. Cys-405 and Cys-432 are oxidised to a cystine. Residue 472-477 participates in substrate binding; the sequence is IANYDY. The active-site Schiff-base intermediate with substrate; via topaquinone is Tyr-475. Tyr-475 carries the 2',4',5'-topaquinone modification. Positions 525 and 527 each coordinate Cu cation. Asp-534, Asp-536, Glu-579, Phe-671, Asp-674, Glu-676, Asp-682, and Leu-683 together coordinate Ca(2+). The Mn(2+) site is built by Asp-534 and Asp-536. Position 682 (Asp-682) interacts with Mn(2+). His-693 contacts Cu cation.

Belongs to the copper/topaquinone oxidase family. As to quaternary structure, homodimer. Cu cation is required as a cofactor. Ca(2+) serves as cofactor. It depends on L-topaquinone as a cofactor. The cofactor is Mn(2+). Post-translationally, topaquinone (TPQ) is generated by copper-dependent autoxidation of a specific tyrosyl residue. Prismatic layer of shell (at protein level). Expressed primarily in the mantle with highest level in the mantle edge and lower level in the mantle pallium.

It is found in the secreted. This Margaritifera margaritifera (Freshwater pearl mussel) protein is Putative amine oxidase [copper-containing].